A 130-amino-acid polypeptide reads, in one-letter code: Small ribosomal subunit protein uS9 (130 aa).

This sequence belongs to the universal ribosomal protein uS9 family.

This chain is Small ribosomal subunit protein uS9, found in Exiguobacterium sp. (strain ATCC BAA-1283 / AT1b).